Reading from the N-terminus, the 119-residue chain is Large ribosomal subunit protein bL17 (119 aa).

It belongs to the bacterial ribosomal protein bL17 family. In terms of assembly, part of the 50S ribosomal subunit. Contacts protein L32.

The chain is Large ribosomal subunit protein bL17 from Mesoplasma florum (strain ATCC 33453 / NBRC 100688 / NCTC 11704 / L1) (Acholeplasma florum).